We begin with the raw amino-acid sequence, 1222 residues long: MSEEQTAIDSPPSTVEGSVETVTTIDSPSTTASTIAATAEEHPQLEKKPTPLPSLKDLPSLGSNAAFANVKVSWGPNMKPAVSNSPSPSPSAPSLTTGLGAKRMRSKNIQEAFTLDLQSQLSITKPELSRIVQSVKKNHDVSVESTLSKNARTFLVSGVAANVHEAKRELVKKLTKPINAVIEVPSKCKASIIGSGGRTIREISDAYEVKINVSKEVNENSYDEDMDDTTSNVSLFGDFESVNLAKAKILAIVKEETKNATIKLVVEDEKYLPYIDVSEFASDEGDEEVKVQFYKKSGDIVILGPREKAKATKTSIQDYLKKLASNLDEEKVKIPSKFQFLIDAEELKEKYNVIVTFPSTPDDELVSFVGLRDKVGEAITYARSSSKSYVVESLDISKAHSKNLTHAKNLIMYFTKYSVLKGLEESHPNVKISLPSIQSLPTAETVTIHISAKSDEANDIKAVRKELISFVNNIPPSETLVITDLDYELFGGSIKHCLLASESSVAFVQFGDYYPNDNSILLVALTEDEDFKPSIEEIQASLNKANESLNSLRTKQNNMETKTYEFSEEVQDSLFKPSSATWKLIMEDISEQEGHLQIKLHTPEENQLTVRGDEKAAKAANKIFESILNSPSSKSKMTVNIPANSVARLIGNKGSNLQQIREKFACQIDIPNEENNNASKDKTVEVTLTGLEYNLTHAKKYLAAEAKKWADIITKELIVPVKFHGSLIGPHGTYRNRLQEKYNVFINFPRDNEIVTIRGPSRGVNKAHEELKALLDFEMENGHKMVINVPAEHVPRIIGKNGDNINDIRAEYGVEMDFLQKSTDPKAQETGEVELEITGSRQNIKDAAKRVESIVAEASDFVTEVLKIDHKYHKSIVGSGGHILREIISKAGGEEIRNKSVDIPNADSENKDITVQGPQKFVKKVVEEINKIVKDAENSVTKTIDIPAERKGALIGPGGIVRRQLESEFNINLFVPNKDDPSGKITITGAPENVEKAEKKILNEIIRENFDREVDVPASIYEYVSERGAFIQKLRMDLSVNVRFGNTSKKANKLARAPIEIPLEKVCGSTEGENAEKTKFTIEEVGAPTSSEEGDITMRLTYEPIDLSSILSDGEEKEVTKDTSNDSAKKEEALDTAVKLIKERIAKAPSATYAGYVWGADTRRFNMIVGPGGSNIKKIREAADVIINVPRKSDKVNDVVYIRGTKAGVEKAGEMVLKSLRR.

A compositionally biased stretch (polar residues) spans 1–12 (MSEEQTAIDSPP). Residues 1-59 (MSEEQTAIDSPPSTVEGSVETVTTIDSPSTTASTIAATAEEHPQLEKKPTPLPSLKDLP) are disordered. The segment covering 13–38 (STVEGSVETVTTIDSPSTTASTIAAT) has biased composition (low complexity). Over residues 39 to 49 (AEEHPQLEKKP) the composition is skewed to basic and acidic residues. At threonine 50 the chain carries Phosphothreonine. Serine 54, serine 63, serine 85, serine 87, and serine 89 each carry phosphoserine. The interval 79–98 (KPAVSNSPSPSPSAPSLTTG) is disordered. The KH 1 domain occupies 177–249 (PINAVIEVPS…ESVNLAKAKI (73 aa)). The residue at position 630 (serine 630) is a Phosphoserine. 5 KH domains span residues 634–702 (KSKM…KKYL), 712–771 (IITK…HEEL), 782–851 (GHKM…AKRV), 861–929 (FVTE…VEEI), and 939–1001 (SVTK…EKKI). The residue at position 1112 (serine 1112) is a Phosphoserine. Residues 1153–1216 (YAGYVWGADT…AGVEKAGEMV (64 aa)) form the KH 7 domain.

It localises to the endoplasmic reticulum membrane. Its subcellular location is the nucleus membrane. Its function is as follows. Involved in the control of mitotic chromosome transmission. Required during cell division for faithful partitioning of the ER-nuclear envelope membranes which, in S.cerevisiae, enclose the duplicated chromosomes. This is Protein SCP160 (SCP160) from Saccharomyces cerevisiae (strain ATCC 204508 / S288c) (Baker's yeast).